The sequence spans 55 residues: ATP synthase F(0) complex subunit 8 (55 aa).

A helical membrane pass occupies residues 8–24; the sequence is PWFMIMLMTWFTYSLLI.

The protein belongs to the ATPase protein 8 family. In terms of assembly, component of the ATP synthase complex composed at least of ATP5F1A/subunit alpha, ATP5F1B/subunit beta, ATP5MC1/subunit c (homooctomer), MT-ATP6/subunit a, MT-ATP8/subunit 8, ATP5ME/subunit e, ATP5MF/subunit f, ATP5MG/subunit g, ATP5MK/subunit k, ATP5MJ/subunit j, ATP5F1C/subunit gamma, ATP5F1D/subunit delta, ATP5F1E/subunit epsilon, ATP5PF/subunit F6, ATP5PB/subunit b, ATP5PD/subunit d, ATP5PO/subunit OSCP. ATP synthase complex consists of a soluble F(1) head domain (subunits alpha(3) and beta(3)) - the catalytic core - and a membrane F(0) domain - the membrane proton channel (subunits c, a, 8, e, f, g, k and j). These two domains are linked by a central stalk (subunits gamma, delta, and epsilon) rotating inside the F1 region and a stationary peripheral stalk (subunits F6, b, d, and OSCP).

It is found in the mitochondrion membrane. In terms of biological role, subunit 8, of the mitochondrial membrane ATP synthase complex (F(1)F(0) ATP synthase or Complex V) that produces ATP from ADP in the presence of a proton gradient across the membrane which is generated by electron transport complexes of the respiratory chain. ATP synthase complex consist of a soluble F(1) head domain - the catalytic core - and a membrane F(1) domain - the membrane proton channel. These two domains are linked by a central stalk rotating inside the F(1) region and a stationary peripheral stalk. During catalysis, ATP synthesis in the catalytic domain of F(1) is coupled via a rotary mechanism of the central stalk subunits to proton translocation. In vivo, can only synthesize ATP although its ATP hydrolase activity can be activated artificially in vitro. Part of the complex F(0) domain. The protein is ATP synthase F(0) complex subunit 8 of Coturnix japonica (Japanese quail).